We begin with the raw amino-acid sequence, 865 residues long: Xylosyltransferase 2 (865 aa).

Topologically, residues 1–15 are cytoplasmic; the sequence is MVASARVQKLVRRYK. The helical; Signal-anchor for type II membrane protein transmembrane segment at 16-36 threads the bilayer; the sequence is LAIATALAILLLQGLVVWSFS. At 37-865 the chain is on the lumenal side; the sequence is GLEEDEPGEK…GPVKADGRLR (829 aa). The interval 39-155 is disordered; sequence EEDEPGEKGR…SVEGAPQPTD (117 aa). Residues 53 to 65 are compositionally biased toward basic and acidic residues; that stretch reads RPLDPGEGSKDTD. Basic residues predominate over residues 73 to 82; sequence SAGRRHGRWR. Residue Asn-122 is glycosylated (N-linked (GlcNAc...) asparagine). 4 disulfides stabilise this stretch: Cys-162-Cys-190, Cys-206-Cys-448, Cys-467-Cys-480, and Cys-469-Cys-478. UDP-alpha-D-xylose contacts are provided by residues Val-239, Asp-267, and 296–298; that span reads TIW. Residue Asn-327 is glycosylated (N-linked (GlcNAc...) asparagine). 400 to 401 contacts UDP-alpha-D-xylose; that stretch reads DW. UDP-alpha-D-xylose contacts are provided by residues Ser-481 and 504-505; that span reads RK. 2 disulfides stabilise this stretch: Cys-581–Cys-833 and Cys-826–Cys-839. An N-linked (GlcNAc...) asparagine glycan is attached at Asn-683.

The protein belongs to the glycosyltransferase 14 family. XylT subfamily. As to quaternary structure, monomer. The cofactor is Mg(2+). Requires Mn(2+) as cofactor. Post-translationally, contains disulfide bonds. Detected in brain, liver, lung, kidney, heart, spleen and testis, and at lower levels in skeletal muscle.

It is found in the golgi apparatus membrane. Its subcellular location is the secreted. The enzyme catalyses UDP-alpha-D-xylose + L-seryl-[protein] = 3-O-(beta-D-xylosyl)-L-seryl-[protein] + UDP + H(+). It participates in glycan metabolism; chondroitin sulfate biosynthesis. Its pathway is glycan metabolism; heparan sulfate biosynthesis. In terms of biological role, catalyzes the first step in the biosynthesis of chondroitin sulfate, heparan sulfate and dermatan sulfate proteoglycans, such as DCN. Transfers D-xylose from UDP-D-xylose to specific serine residues of the core protein. In Mus musculus (Mouse), this protein is Xylosyltransferase 2 (Xylt2).